The following is a 123-amino-acid chain: Protein Wnt-3b (123 aa).

Ser1 carries O-palmitoleoyl serine; by PORCN lipidation. Cys89 and Cys104 are joined by a disulfide. N-linked (GlcNAc...) asparagine glycosylation is present at Asn90.

This sequence belongs to the Wnt family. Palmitoleoylation is required for efficient binding to frizzled receptors. Depalmitoleoylation leads to Wnt signaling pathway inhibition.

The protein resides in the secreted. Its subcellular location is the extracellular space. It is found in the extracellular matrix. In terms of biological role, ligand for members of the frizzled family of seven transmembrane receptors. Probable developmental protein. May be a signaling molecule which affects the development of discrete regions of tissues. Is likely to signal over only few cell diameters. The chain is Protein Wnt-3b (WNT-3B) from Plethodon jordani (Red-cheeked salamander).